The following is a 319-amino-acid chain: Ribosomal RNA small subunit methyltransferase H (319 aa).

S-adenosyl-L-methionine contacts are provided by residues 37 to 39, D56, L90, D104, and Q111; that span reads GGH.

It belongs to the methyltransferase superfamily. RsmH family.

It is found in the cytoplasm. It catalyses the reaction cytidine(1402) in 16S rRNA + S-adenosyl-L-methionine = N(4)-methylcytidine(1402) in 16S rRNA + S-adenosyl-L-homocysteine + H(+). Its function is as follows. Specifically methylates the N4 position of cytidine in position 1402 (C1402) of 16S rRNA. The chain is Ribosomal RNA small subunit methyltransferase H from Nocardioides sp. (strain ATCC BAA-499 / JS614).